A 209-amino-acid chain; its full sequence is Imidazole glycerol phosphate synthase subunit HisH (209 aa).

The Glutamine amidotransferase type-1 domain maps to Met-1–Ser-205. Cys-79 serves as the catalytic Nucleophile. Catalysis depends on residues His-180 and Glu-182.

Heterodimer of HisH and HisF.

It localises to the cytoplasm. It catalyses the reaction 5-[(5-phospho-1-deoxy-D-ribulos-1-ylimino)methylamino]-1-(5-phospho-beta-D-ribosyl)imidazole-4-carboxamide + L-glutamine = D-erythro-1-(imidazol-4-yl)glycerol 3-phosphate + 5-amino-1-(5-phospho-beta-D-ribosyl)imidazole-4-carboxamide + L-glutamate + H(+). The catalysed reaction is L-glutamine + H2O = L-glutamate + NH4(+). Its pathway is amino-acid biosynthesis; L-histidine biosynthesis; L-histidine from 5-phospho-alpha-D-ribose 1-diphosphate: step 5/9. IGPS catalyzes the conversion of PRFAR and glutamine to IGP, AICAR and glutamate. The HisH subunit catalyzes the hydrolysis of glutamine to glutamate and ammonia as part of the synthesis of IGP and AICAR. The resulting ammonia molecule is channeled to the active site of HisF. The protein is Imidazole glycerol phosphate synthase subunit HisH of Bacillus cereus (strain ATCC 10987 / NRS 248).